The sequence spans 404 residues: Mitochondrial potassium channel (404 aa).

A mitochondrion-targeting transit peptide spans 1-30 (MTGRSRVLAMRHVGGVSPVLVRRDLFLTRT). The Mitochondrial matrix segment spans residues 31 to 196 (LCSHGPSQPR…KERTRAERTK (166 aa)). Ser65 carries the post-translational modification Phosphoserine. The stretch at 111–138 (VREAREDLESQQTKLKEVRDRLDRISRD) forms a coiled coil. Residues 197 to 217 (NWSLIGSVLGALIGVAGSTYV) traverse the membrane as a helical segment. The Mitochondrial intermembrane portion of the chain corresponds to 218-380 (NRVRLQELKA…LEAQVNRNTV (163 aa)). Residues 381 to 401 (YGTLVTCATFVAVLPVLYMLF) traverse the membrane as a helical segment. The Mitochondrial matrix portion of the chain corresponds to 402–404 (RAS).

The mitochondrial potassium channel (mitoK(ATP)) forms a heteromultimer.

The protein resides in the mitochondrion inner membrane. The enzyme catalyses K(+)(in) = K(+)(out). Channel activity inhibited by ATP via ABCB8/MITOSUR subunit. In terms of biological role, pore-forming subunit of the mitochondrial ATP-gated potassium channel (mitoK(ATP)). Together with ATP-binding subunit ABCB8/MITOSUR of the mitoK(ATP) channel, mediates ATP-dependent K(+) currents across the mitochondrial inner membrane. An increase in ATP intracellular levels closes the channel, inhibiting K(+) transport, whereas a decrease in ATP levels enhances K(+) uptake in the mitochondrial matrix. May contribute to the homeostatic control of cellular metabolism under stress conditions by regulating the mitochondrial matrix volume. This Bos taurus (Bovine) protein is Mitochondrial potassium channel.